Reading from the N-terminus, the 496-residue chain is NADH-ubiquinone oxidoreductase 51 kDa subunit, mitochondrial (496 aa).

Residues 1–30 constitute a mitochondrion transit peptide; sequence MISRAAAPSSSIASLSSRSLRAQAPAARSF. 98-107 contacts NAD(+); that stretch reads GRGGAGFPSG. 214 to 261 serves as a coordination point for FMN; the sequence is GMGAYVCGEETSLIESIEGKAGKPRLKPPFPAAVGLFGCPSTVTNVET. [4Fe-4S] cluster is bound by residues Cys-393, Cys-396, Cys-399, and Cys-439.

Belongs to the complex I 51 kDa subunit family. Complex I is composed of about 40 different subunits. This is a component of the flavoprotein-sulfur (FP) fragment of the enzyme. FMN serves as cofactor. [4Fe-4S] cluster is required as a cofactor.

It localises to the mitochondrion inner membrane. The catalysed reaction is a ubiquinone + NADH + 5 H(+)(in) = a ubiquinol + NAD(+) + 4 H(+)(out). Functionally, core subunit of the mitochondrial membrane respiratory chain NADH dehydrogenase (Complex I) that is believed to belong to the minimal assembly required for catalysis. Complex I functions in the transfer of electrons from NADH to the respiratory chain. The immediate electron acceptor for the enzyme is believed to be ubiquinone. In Aspergillus niger, this protein is NADH-ubiquinone oxidoreductase 51 kDa subunit, mitochondrial (NUO51).